Consider the following 1358-residue polypeptide: DNA-directed RNA polymerase subunit beta (1358 aa).

The protein belongs to the RNA polymerase beta chain family. The RNAP catalytic core consists of 2 alpha, 1 beta, 1 beta' and 1 omega subunit. When a sigma factor is associated with the core the holoenzyme is formed, which can initiate transcription.

It catalyses the reaction RNA(n) + a ribonucleoside 5'-triphosphate = RNA(n+1) + diphosphate. Its function is as follows. DNA-dependent RNA polymerase catalyzes the transcription of DNA into RNA using the four ribonucleoside triphosphates as substrates. This is DNA-directed RNA polymerase subunit beta from Francisella philomiragia subsp. philomiragia (strain ATCC 25017 / CCUG 19701 / FSC 153 / O#319-036).